The sequence spans 412 residues: Transforming growth factor beta-3 proprotein (412 aa).

The N-terminal stretch at 1–23 (MKMHLQRALVVLALLNFATVSLS) is a signal peptide. N74, N135, and N142 each carry an N-linked (GlcNAc...) asparagine glycan. The Cell attachment site motif lies at 261–263 (RGD). An N5-methylglutamine modification is found at Q293. 4 cysteine pairs are disulfide-bonded: C307-C316, C315-C378, C344-C409, and C348-C411.

This sequence belongs to the TGF-beta family. In terms of assembly, interacts with ASPN. Latency-associated peptide: Homodimer; disulfide-linked. Latency-associated peptide: Interacts with Transforming growth factor beta-3 (TGF-beta-3) chain; interaction is non-covalent and maintains (TGF-beta-3) in a latent state. Latency-associated peptide: Interacts with LRRC32/GARP; leading to regulate activation of TGF-beta-3 and promote epithelial fusion during palate development. Latency-associated peptide: Interacts (via cell attachment site) with integrins, leading to release of the active TGF-beta-3. Transforming growth factor beta-3: Homodimer; disulfide-linked. Transforming growth factor beta-3: Interacts with TGF-beta receptors (TGFBR1 and TGFBR2), leading to signal transduction. Transforming growth factor beta-3 proprotein: The precursor proprotein is cleaved in the Golgi apparatus to form Transforming growth factor beta-3 (TGF-beta-3) and Latency-associated peptide (LAP) chains, which remain non-covalently linked, rendering TGF-beta-3 inactive. In terms of processing, methylated at Gln-293 by N6AMT1.

Its subcellular location is the secreted. It is found in the extracellular space. The protein localises to the extracellular matrix. In terms of biological role, transforming growth factor beta-3 proprotein: Precursor of the Latency-associated peptide (LAP) and Transforming growth factor beta-3 (TGF-beta-3) chains, which constitute the regulatory and active subunit of TGF-beta-3, respectively. Required to maintain the Transforming growth factor beta-3 (TGF-beta-3) chain in a latent state during storage in extracellular matrix. Associates non-covalently with TGF-beta-3 and regulates its activation via interaction with 'milieu molecules', such as LTBP1 and LRRC32/GARP, that control activation of TGF-beta-3. Interaction with integrins results in distortion of the Latency-associated peptide chain and subsequent release of the active TGF-beta-3. Its function is as follows. Transforming growth factor beta-3: Multifunctional protein that regulates embryogenesis and cell differentiation and is required in various processes such as secondary palate development. Activation into mature form follows different steps: following cleavage of the proprotein in the Golgi apparatus, Latency-associated peptide (LAP) and Transforming growth factor beta-3 (TGF-beta-3) chains remain non-covalently linked rendering TGF-beta-3 inactive during storage in extracellular matrix. At the same time, LAP chain interacts with 'milieu molecules', such as LTBP1 and LRRC32/GARP that control activation of TGF-beta-3 and maintain it in a latent state during storage in extracellular milieus. TGF-beta-3 is released from LAP by integrins: integrin-binding results in distortion of the LAP chain and subsequent release of the active TGF-beta-3. Once activated following release of LAP, TGF-beta-3 acts by binding to TGF-beta receptors (TGFBR1 and TGFBR2), which transduce signal. This is Transforming growth factor beta-3 proprotein (TGFB3) from Homo sapiens (Human).